Here is a 298-residue protein sequence, read N- to C-terminus: ATP synthase gamma chain (298 aa).

The protein belongs to the ATPase gamma chain family. F-type ATPases have 2 components, CF(1) - the catalytic core - and CF(0) - the membrane proton channel. CF(1) has five subunits: alpha(3), beta(3), gamma(1), delta(1), epsilon(1). CF(0) has three main subunits: a, b and c.

It localises to the cell inner membrane. Its function is as follows. Produces ATP from ADP in the presence of a proton gradient across the membrane. The gamma chain is believed to be important in regulating ATPase activity and the flow of protons through the CF(0) complex. This Desulfosudis oleivorans (strain DSM 6200 / JCM 39069 / Hxd3) (Desulfococcus oleovorans) protein is ATP synthase gamma chain.